Reading from the N-terminus, the 276-residue chain is Mitochondrial outer membrane protein porin 2 (276 aa).

A Phosphoserine modification is found at serine 76. Phosphothreonine is present on threonine 236.

Belongs to the eukaryotic mitochondrial porin (TC 1.B.8.1) family. Expressed in root tips, steles, leaves, sepals, petals, stamen and pistils.

It is found in the mitochondrion outer membrane. Its function is as follows. Forms a channel through the mitochondrial outer membrane that allows diffusion of small hydrophilic molecules. The channel adopts an open conformation at low or zero membrane potential and a closed conformation at potentials above 30-40 mV. The open state has a weak anion selectivity whereas the closed state is cation-selective. Involved in plant growth and development at the vegetative and reproductive stages. Is important for leaf and pollen development and mitochondrial membrane potential steady state. May be involved in ABA-mediated early seedling development and disease resistance. The sequence is that of Mitochondrial outer membrane protein porin 2 (VDAC2) from Arabidopsis thaliana (Mouse-ear cress).